The sequence spans 695 residues: NADPH--cytochrome P450 reductase (695 aa).

Topologically, residues 1–8 are lumenal; sequence MAQLDTLD. The chain crosses the membrane as a helical span at residues 9–31; sequence LVVLVALLVGSVAYFTKGTYWAV. At 32 to 695 the chain is on the cytoplasmic side; the sequence is AKDPYASSGP…SGSYQEDVWS (664 aa). The Flavodoxin-like domain maps to 66 to 221; it reads CVIFYGSQTG…DFLAWKEPMW (156 aa). Residues 72–77, 123–126, 169–178, and aspartate 204 each bind FMN; these read SQTGTA, ATYG, and LGNNTYEHYN. The region spanning 277-538 is the FAD-binding FR-type domain; the sequence is HNPFIAPIVE…HVRHSNFKLP (262 aa). Arginine 296 contributes to the NADP(+) binding site. Residues 451-454, 469-471, and 486-489 each bind FAD; these read RYYS, TAV, and GVTT. NADP(+) is bound by residues threonine 552, 614 to 615, 620 to 624, and glutamate 656; these read SR and KVYVQ. Tryptophan 694 provides a ligand contact to FAD.

This sequence belongs to the NADPH--cytochrome P450 reductase family. In the N-terminal section; belongs to the flavodoxin family. It in the C-terminal section; belongs to the flavoprotein pyridine nucleotide cytochrome reductase family. The cofactor is FAD. FMN serves as cofactor.

The protein localises to the endoplasmic reticulum membrane. It is found in the mitochondrion outer membrane. Its subcellular location is the cell membrane. The catalysed reaction is 2 oxidized [cytochrome P450] + NADPH = 2 reduced [cytochrome P450] + NADP(+) + H(+). Functionally, this enzyme is required for electron transfer from NADP to cytochrome P450 in microsomes. It can also provide electron transfer to heme oxygenase and cytochrome B5. Involved in ergosterol biosynthesis. This Aspergillus oryzae (strain ATCC 42149 / RIB 40) (Yellow koji mold) protein is NADPH--cytochrome P450 reductase.